The primary structure comprises 109 residues: Non-structural protein ORF4a (109 aa).

In terms of assembly, interacts with host PRKRA/PACT.

The protein resides in the host cytoplasm. In terms of biological role, dsRNA-binding protein that plays a role in the inhibition of host innate response. Suppresses host PACT-induced activation of RIGI and MDA5 and thereby circumvents the production of type I interferons. Also prevents the activation of host NF-kappa-B. Inhibits the integrated stress response (ISR) in the infected cell by binding to dsRNA and inhibiting EIF2AK2-mediated phosphorylation of EIF2S1/eIF2-alpha. Stress granule formation is thus inhibited, which allows protein synthesis and viral replication. The sequence is that of Non-structural protein ORF4a (ORF4a) from Middle East respiratory syndrome-related coronavirus (isolate United Kingdom/H123990006/2012) (MERS-CoV).